The primary structure comprises 212 residues: uncharacterized protein (212 aa).

S-adenosyl-L-methionine contacts are provided by Gly53, Glu74, and Asp97.

This sequence belongs to the methyltransferase superfamily. YrrT family.

Could be a S-adenosyl-L-methionine-dependent methyltransferase. This is an uncharacterized protein from Bacillus cytotoxicus (strain DSM 22905 / CIP 110041 / 391-98 / NVH 391-98).